Here is a 744-residue protein sequence, read N- to C-terminus: Tripartite motif-containing protein 3 (744 aa).

Position 2 is an N-acetylalanine (alanine 2). Positions 2–290 are interaction with KIF21B; it reads AKREDSPGPE…LAAQAFPERP (289 aa). At serine 7 the chain carries Phosphoserine. An RING-type zinc finger spans residues 22–63; it reads CSICLDRYRCPKVLPCLHTFCERCLQNYIPPQSLTLSCPVCR. Residues 110–151 form a B box-type zinc finger; it reads GRPLSCPNHEGKTMEFYCEACETAMCGECRAGEHREHGTVLL. The Zn(2+) site is built by cysteine 115, histidine 118, cysteine 138, and histidine 143. Residues 153 to 224 are a coiled coil; the sequence is DVVEQHKAAL…RKQALVSDLE (72 aa). The stretch at 317–418 is one Filamin repeat; that stretch reads TTSATAHETV…VRGSPFRVRA (102 aa). The interval 419-464 is disordered; it reads LRPGDLPPSPDDVKRRVKSPGGPGSHVRQKAVRRPSSMYSTGGKRK. Residue serine 427 is modified to Phosphoserine. 6 NHL repeats span residues 473–516, 520–563, 564–605, 609–652, 656–699, and 700–743; these read VFRV…FSNE, KFRF…FSPE, GKFK…FQPN, VGRF…YSAD, LFKF…FDSS, and GSFL…YRYL.

It belongs to the TRIM/RBCC family. In terms of assembly, forms homooligomers. Interacts with TRIM2; this interaction reduces TRIM2 activity. Associates with myosin-Vb (MYO5B) and alpha-actinin-4 (ACTN4). Component of the CART complex, at least composed of ACTN4, HGS/HRS, MYO5B and TRIM3. Interacts with ZFYVE28/LST2. Interacts with KIF21B.

The protein resides in the cytoplasm. Its subcellular location is the early endosome. It is found in the golgi apparatus. It localises to the trans-Golgi network. The protein localises to the cell projection. The protein resides in the dendrite. It catalyses the reaction S-ubiquitinyl-[E2 ubiquitin-conjugating enzyme]-L-cysteine + [acceptor protein]-L-lysine = [E2 ubiquitin-conjugating enzyme]-L-cysteine + N(6)-ubiquitinyl-[acceptor protein]-L-lysine.. Its function is as follows. E3 ubiquitin ligase that plays essential roles in neuronal functions such as regulation of neuronal plasticity, learning, and memory. In addition to its neuronal functions, participates in other biological processes such as innate immunity or cell cycle regulation. Component of the cytoskeleton-associated recycling or transport complex in neurons, polyubiquitinates gamma-actin, thus regulating neuronal plasticity, learning, and memory. Ubiquitinates postsynaptic scaffold GKAP, a neuronal substrate involved in synaptic remodeling and thereby modulates dendritic spine morphology. Positively regulates motility of microtubule-dependent motor protein KIF21B. Induces growth arrest via its RING-dependent E3 ligase activity and ubiquinates CDKN1A. Positively regulates TLR3-mediated signaling by mediating 'Lys-63'-linked polyubiquitination of TLR3. In turn, promotes the recognition and sorting of polyubiquitinated TLR3 by the ESCRT complexes. The sequence is that of Tripartite motif-containing protein 3 (Trim3) from Mus musculus (Mouse).